Consider the following 108-residue polypeptide: ATP-dependent Clp protease adapter protein ClpS (108 aa).

This sequence belongs to the ClpS family. In terms of assembly, binds to the N-terminal domain of the chaperone ClpA.

In terms of biological role, involved in the modulation of the specificity of the ClpAP-mediated ATP-dependent protein degradation. This Cupriavidus necator (strain ATCC 17699 / DSM 428 / KCTC 22496 / NCIMB 10442 / H16 / Stanier 337) (Ralstonia eutropha) protein is ATP-dependent Clp protease adapter protein ClpS.